The sequence spans 876 residues: Leucine--tRNA ligase (876 aa).

Residues 42–52 (PYPSGKLHMGH) carry the 'HIGH' region motif. Residues 634–638 (KMGKS) carry the 'KMSKS' region motif. Residue Lys-637 coordinates ATP.

This sequence belongs to the class-I aminoacyl-tRNA synthetase family.

It localises to the cytoplasm. It catalyses the reaction tRNA(Leu) + L-leucine + ATP = L-leucyl-tRNA(Leu) + AMP + diphosphate. The sequence is that of Leucine--tRNA ligase from Variovorax paradoxus (strain S110).